The following is a 397-amino-acid chain: MACMLCCSPLPALSSPATGGAAVVGFSSSSRRKAAHVHPAVAVKDHDLSSSSPAACGDEGGGAVVIEEEAHPSMMMSVAAPAMKKKAVAARWRPPRLVVPAVAGADEAMAAAAAVKAAKEKEEEEAMEVEGEGFWVASRRGLRHAMEDGYGVITHKIEGHSQMAFYGVYDGHGGRAAVDFVAGRLGNNVVAAAEKQRLSEKASSPAAADHVAAAIRAAYLATDSEFLSQGTRGGACAATALVIDGDLYVANLGDCRAVISRHGAAAALTSDHTPARDDERSRIESSGGYVSCGSNGVWRVQDCLAVTRSFGDGGLKRWVVAEPEVSRTPLAGAGCEFLVIASDGLWNKVSNQEAVDAVAAGHYSVDSCRRLVDMARRRGSRDDVTVMVVDLKRFLNC.

The region spanning 133–391 (GFWVASRRGL…DDVTVMVVDL (259 aa)) is the PPM-type phosphatase domain. Mn(2+)-binding residues include Asp-170, Gly-171, Asp-343, and Asp-382.

This sequence belongs to the PP2C family. It depends on Mg(2+) as a cofactor. Mn(2+) serves as cofactor.

It catalyses the reaction O-phospho-L-seryl-[protein] + H2O = L-seryl-[protein] + phosphate. The enzyme catalyses O-phospho-L-threonyl-[protein] + H2O = L-threonyl-[protein] + phosphate. This Oryza sativa subsp. japonica (Rice) protein is Probable protein phosphatase 2C 74.